A 114-amino-acid chain; its full sequence is Immunomodulatory protein FIP-Fve (114 aa).

Ser1 bears the N-acetylserine mark.

This sequence belongs to the fungal immunomodulatory protein (FIP) family. Homodimer.

Lectin with specificity for complex cell-surface carbohydrates. Possesses immunomodulatory activity, stimulates lymphocyte mitogenesis, suppresses systemic anaphylaxis reactions and edema, enhances transcription of IL-2, IFN-gamma and TNF-alpha and hemagglutinates red blood cells. This is Immunomodulatory protein FIP-Fve from Flammulina velutipes (Agaricus velutipes).